A 249-amino-acid chain; its full sequence is Probable transcriptional regulatory protein Csal_1845 (249 aa).

Belongs to the TACO1 family.

The protein localises to the cytoplasm. This chain is Probable transcriptional regulatory protein Csal_1845, found in Chromohalobacter salexigens (strain ATCC BAA-138 / DSM 3043 / CIP 106854 / NCIMB 13768 / 1H11).